Reading from the N-terminus, the 4691-residue chain is Plectin (4691 aa).

The segment at 1–1478 is globular 1; that stretch reads MVAGMLMPLD…SELTTLTSQY (1478 aa). The residue at position 21 (arginine 21) is a Phosphoserine. Valine 26 carries the phosphotyrosine modification. 2 disordered regions span residues 113 to 161 and 167 to 186; these read RSPH…TPVV and GTLARPGPEPAPATDERDRV. Residues 137–154 are compositionally biased toward basic and acidic residues; sequence DPAREERQVYRRKEREEG. An actin-binding region spans residues 181–411; it reads DERDRVQKKT…YVSSLYDAMP (231 aa). 2 consecutive Calponin-homology (CH) domains span residues 185-293 and 306-411; these read RVQK…LHFQ and MTAK…DAMP. One copy of the Spectrin 1 repeat lies at 653-727; sequence LQSTQRRPEL…ERARNDESQL (75 aa). Residue serine 728 is modified to Phosphoserine. 2 Spectrin repeats span residues 748–832 and 845–938; these read KLLN…REDH and LQTQ…AIVQ. At threonine 823 the chain carries Phosphothreonine. Residues 949–1006 form the SH3 domain; the sequence is RGHVPLIAVCDYKQVEVTVHKGDQCQLVGPAQPSHWKVLSGSSSEAAVPSVCFLVPPP. Residues 963 to 4572 form a required for interaction with intermediate filament proteins region; sequence VEVTVHKGDQ…ARTAQKLRDV (3610 aa). Residue serine 1055 is modified to Phosphoserine. One copy of the Spectrin 4 repeat lies at 1323-1423; the sequence is RERVTQLLER…QKFAKQYINA (101 aa). Phosphoserine is present on serine 1443. Coiled coils occupy residues 1477 to 1697 and 1729 to 2764; these read QYIK…ERRL and SFAE…TTQA. A central fibrous rod domain region spans residues 1479–2762; the sequence is IKFISETLRR…ALAHSEIATT (1284 aa). The interval 1626–1653 is disordered; it reads RAEEAEAQKRQAQEEAERLRRQVQDESQ. A Phosphoserine modification is found at serine 1729. Lysine 1733 bears the N6-acetyllysine mark. 3 disordered regions span residues 1801 to 1835, 2100 to 2141, and 2223 to 2317; these read SLAQADAEKQKEEAEREARRRGKAEEQAVRQRELA, AEDT…SLAA, and RLRS…KHKK. Basic and acidic residues-rich tracts occupy residues 1806–1835, 2100–2116, 2124–2136, and 2223–2266; these read DAEKQKEEAEREARRRGKAEEQAVRQRELA, AEDTMRSKEQAELEAAR, EEQRRREAEERVQ, and RLRS…KQSA. The span at 2267–2280 shows a compositional bias: low complexity; that stretch reads EEQAQAQAQAQAAA. A compositionally biased stretch (basic and acidic residues) spans 2281-2296; that stretch reads EKLRKEAEQEAARRAQ. Serine 2639 is modified (phosphoserine). At lysine 2644 the chain carries N6-acetyllysine. The segment at 2675-2728 is disordered; the sequence is LREEQQRQQQQMEQEKQELMASMEEARRRQREAEEGVRRKQEELQHLEQQRQQQ. The span at 2687–2728 shows a compositional bias: basic and acidic residues; the sequence is EQEKQELMASMEEARRRQREAEEGVRRKQEELQHLEQQRQQQ. The tract at residues 2763-4691 is globular 2; it reads QAASTKALPN…SLGGPESAVA (1929 aa). The residue at position 2781 (serine 2781) is a Phosphoserine. At tyrosine 2788 the chain carries Phosphotyrosine. 6 Plectin repeats span residues 2795 to 2832, 2833 to 2870, 2871 to 2908, 2909 to 2946, 2947 to 2984, and 2988 to 3022; these read QKVPAQQLQEAGILSQEELQRLAQGHTTVAELTQREDV, YRYLKGRSSIAGLLLKPTNEKLSVYTALQRQLLSPGTA, LILLEAQAASGFLLDPVRNRRLTVNEAVKEGVVGPELH, HKLLSAERAVTGYKDPYTGEQISLFQAMKKDLIVRDHG, VRLLEAQIATGGIIDPVHSHRVPVDVAYKRGYFDEEMN, and SDPSDDTKGFFDPNTHENLTYLQLLERCVEDPETG. Serine 2809 bears the Phosphoserine mark. Threonine 2893 bears the Phosphothreonine mark. Phosphotyrosine is present on tyrosine 3040. N6-acetyllysine occurs at positions 3060 and 3098. 6 Plectin repeats span residues 3123–3160, 3161–3198, 3199–3236, 3237–3274, 3275–3312, and 3315–3350; these read ALVPAAELLDSGVISHELYQQLQRGERSVREVAEADSV, RQALRGTNVIAGVWLEEAGQKLSIYEALKKDLLQPEVA, VALLEAQAGTGHIIDPATSARLTVDEAVRAGLVGPELH, EKLLSAEKAVTGYRDPYSGQSVSLFQALKKGLIPREQG, LRLLDAQLSTGGIVDPSKSHRVPLDVAYARGYLDKETN, and LTSPRDDARVYHDPSTQEPVTYSQLQQRCRSDQLTG. Over residues 3312–3326 the composition is skewed to basic and acidic residues; that stretch reads NRALTSPRDDARVYH. The interval 3312–3338 is disordered; that stretch reads NRALTSPRDDARVYHDPSTQEPVTYSQ. Residues 3328–3338 show a composition bias toward polar residues; it reads PSTQEPVTYSQ. Residue tyrosine 3369 is modified to Phosphotyrosine. The residue at position 3427 (lysine 3427) is an N6-acetyllysine. Plectin repeat units follow at residues 3492-3529, 3530-3567, 3568-3605, 3606-3643, and 3647-3681; these read RTLLQGSGCLAGIYLEDSKEKVTIYEAMRRGLLRPSTA, TLLLEAQAATGFLVDPVRNQRLYVHEAVKAGVVGPELH, EKLLSAEKAVTGYKDPYSGNTISLFQAMKKGLVLRDHA, IRLLEAQVATGGIIDPVHSHRLPVDVAYQRGYFDEEMN, and ADPSDDTKGFFDPNTHENLTYLQLLERCVEDPETG. Phosphothreonine is present on threonine 3792. At tyrosine 3797 the chain carries Phosphotyrosine. Plectin repeat units follow at residues 3827 to 3864, 3865 to 3902, 3903 to 3940, 3941 to 3978, and 3982 to 4015; these read WRYLYGTGAVAGVYLPGSRQTLTIYQALKKGLLSAEVA, RLLLEAQAATGFLLDPVKGERLTVDEAVRKGLVGPELH, DRLLSAERAVTGYRDPYTEQTISLFQAMKKELIPAEEA, LRLLDAQLATGGIVDPRLGFHLPLEVAYQRGYLNKDTH, and SEPSEVRSYVDPSTDERLSYTQLLKRCRRDDPSG. Residues 3954–4291 are required for interaction with type2 keratins, DES and VIM; sequence VDPRLGFHLP…KRRVVIVDPE (338 aa). Residue threonine 4037 is modified to Phosphothreonine. The residue at position 4061 (serine 4061) is a Phosphoserine. Plectin repeat units follow at residues 4070 to 4107, 4108 to 4145, 4146 to 4183, 4184 to 4221, 4225 to 4259, and 4272 to 4312; these read QKFLEGTSCIAGVFVDATKERLSVYQAMKKGIIRPGTA, FELLEAQAATGYVIDPIKGLKLTVEEAVRMGIVGPEFK, DKLLSAERAVTGYKDPYSGKLISLFQAMKKGLILKDHG, IRLLEAQIATGGIIDPEESHRLPVEVAYKRGLFDEEMN, TDPSDDTKGFFDPNTEENLTYLQLMERCITDPQTG, and RKTS…HQTY. The binding to intermediate filaments stretch occupies residues 4257-4307; sequence QTGLCLLPLKEKKRERKTSSKSSVRKRRVVIVDPETGKEMSVYEAYRKGLI. The interval 4387–4420 is disordered; sequence FRSRSSSVGSSSSYPISSAGPRTQLASWSDPTEE. 8 positions are modified to phosphoserine: serine 4389, serine 4391, serine 4392, serine 4393, serine 4396, serine 4397, serine 4398, and serine 4399. Low complexity predominate over residues 4389–4404; it reads SRSSSVGSSSSYPISS. At tyrosine 4400 the chain carries Phosphotyrosine. A phosphoserine mark is found at serine 4403 and serine 4413. A compositionally biased stretch (polar residues) spans 4406–4416; sequence GPRTQLASWSD. Plectin repeat units follow at residues 4415–4452, 4453–4490, 4491–4528, 4529–4566, and 4567–4604; these read SDPTEETGPVAGILDTETLEKVSITEAMHRNLVDNITG, QRLLEAQACTGGIIDPSTGERFPVTEAVNKGLVDKIMV, DRINLAQKAFCGFEDPRTKTKMSAAQALKKGWLYYEAG, QRFLEVQYLTGGLIEPDTPGRVSLDEALQRGTVDARTA, and QKLRDVSAYSKYLTCPKTKLKISYKDALDRSMVEEGTG. Threonine 4418 carries the post-translational modification Phosphothreonine. The tract at residues 4503–4572 is required for efficient interaction with KRT5 and KRT14 heterodimers; sequence FEDPRTKTKM…ARTAQKLRDV (70 aa). Threonine 4546 carries the phosphothreonine; by CDK1 modification. 2 positions are modified to phosphoserine: serine 4614 and serine 4620. The segment covering 4618–4678 has biased composition (low complexity); it reads YYSPYSVSGS…SGYGRRYASG (61 aa). The disordered stretch occupies residues 4618 to 4691; that stretch reads YYSPYSVSGS…SLGGPESAVA (74 aa). A Phosphotyrosine modification is found at tyrosine 4622. Serine 4623, serine 4625, and serine 4629 each carry phosphoserine. Threonine 4630 is modified (phosphothreonine). The 4 X 4 AA tandem repeats of G-S-R-X stretch occupies residues 4632–4647; the sequence is GSRTGSRTGSRAGSRR. Serine 4633 bears the Phosphoserine mark. Residues arginine 4634 and arginine 4647 each carry the omega-N-methylarginine modification. Serine 4649 and serine 4682 each carry phosphoserine.

The protein belongs to the plakin or cytolinker family. As to quaternary structure, homodimer or homotetramer. Interacts (via actin-binding domain) with SYNE3. Interacts (via calponin-homology (CH) 1 domain) with VIM (via rod region). Interacts (via N-terminus) with DST isoform 2 (via N-terminus). Interacts with FER. Interacts with TOR1A. Interacts with ANK3. Identified in complexes that contain VIM, EZR, AHNAK, BFSP1, BFSP2, ANK2, PLEC, PRX and spectrin. In terms of assembly, interacts with KRT14, heterodimers consisting of KRT8 and KRT18, heterodimers consisting of KRT5 and KRT14, heterodimers consisting of KRT14 and KRT15, and heterodimers consisting of KRT1 and KRT10. Interacts with DES and VIM. Phosphorylated by CDK1; regulates dissociation from intermediate filaments during mitosis. Isoform PLEC-1A is phosphorylated on Ser-21. Isoform PLEC-1A is phosphorylated on Tyr-26. Detected in eye lens fiber cells (at protein level). Expressed at high levels in lung, brain, small intestine, muscle, heart and skin with lower levels found in kidney, liver, uterus, spleen and salivary gland.

The protein resides in the cytoplasm. Its subcellular location is the cytoskeleton. It is found in the cell junction. It localises to the hemidesmosome. The protein localises to the cell projection. The protein resides in the podosome. In terms of biological role, interlinks intermediate filaments with microtubules and microfilaments and anchors intermediate filaments to desmosomes or hemidesmosomes. May be involved not only in the cross-linking and stabilization of cytoskeletal intermediate filaments network, but also in the regulation of their dynamics. The polypeptide is Plectin (Plec) (Mus musculus (Mouse)).